A 344-amino-acid chain; its full sequence is Anthranilate phosphoribosyltransferase (344 aa).

5-phospho-alpha-D-ribose 1-diphosphate contacts are provided by residues Gly-85, 88–89 (GD), Thr-93, 95–98 (NIST), 113–121 (KHGGRSVSS), and Ser-125. Gly-85 contacts anthranilate. Ser-97 lines the Mg(2+) pocket. Arg-171 contributes to the anthranilate binding site. Mg(2+)-binding residues include Asp-230 and Glu-231.

This sequence belongs to the anthranilate phosphoribosyltransferase family. Homodimer. Mg(2+) is required as a cofactor.

It carries out the reaction N-(5-phospho-beta-D-ribosyl)anthranilate + diphosphate = 5-phospho-alpha-D-ribose 1-diphosphate + anthranilate. It participates in amino-acid biosynthesis; L-tryptophan biosynthesis; L-tryptophan from chorismate: step 2/5. Functionally, catalyzes the transfer of the phosphoribosyl group of 5-phosphorylribose-1-pyrophosphate (PRPP) to anthranilate to yield N-(5'-phosphoribosyl)-anthranilate (PRA). This chain is Anthranilate phosphoribosyltransferase, found in Delftia acidovorans (strain DSM 14801 / SPH-1).